The following is a 1378-amino-acid chain: DNA-directed RNA polymerase subunit beta (1378 aa).

This sequence belongs to the RNA polymerase beta chain family. In terms of assembly, the RNAP catalytic core consists of 2 alpha, 1 beta, 1 beta' and 1 omega subunit. When a sigma factor is associated with the core the holoenzyme is formed, which can initiate transcription.

It catalyses the reaction RNA(n) + a ribonucleoside 5'-triphosphate = RNA(n+1) + diphosphate. In terms of biological role, DNA-dependent RNA polymerase catalyzes the transcription of DNA into RNA using the four ribonucleoside triphosphates as substrates. This is DNA-directed RNA polymerase subunit beta from Campylobacter jejuni subsp. jejuni serotype O:23/36 (strain 81-176).